Here is a 393-residue protein sequence, read N- to C-terminus: Homogentisate phytyltransferase 1, chloroplastic (393 aa).

A chloroplast-targeting transit peptide spans 1-36; that stretch reads MESLLSSSSLVSAAGGFCWKKQNLKLHSLSEIRVLR. 9 helical membrane passes run 108-128, 133-153, 170-190, 205-227, 232-252, 271-291, 314-334, 338-358, and 371-391; these read TVIG…EKVS, LLFT…IYIV, YLPL…VASF, PLFW…LPLL, FALV…QIAF, LIFA…FKDI, VFWT…LVGA, FIWS…TLWA, and ITSC…LLPF.

The protein belongs to the UbiA prenyltransferase family.

Its subcellular location is the plastid. The protein localises to the chloroplast membrane. The catalysed reaction is phytyl diphosphate + homogentisate + H(+) = 2-methyl-6-phytyl-1,4-benzene-1,4-diol + CO2 + diphosphate. It functions in the pathway cofactor biosynthesis; tocopherol biosynthesis. In terms of biological role, involved in the synthesis of tocopherol (vitamin E). Catalyzes the condensation of homogentisate and phytyl diphosphate to form dimethylphytylhydrquinone. Low activity with geranylgeranyl diphosphate as substrate, but no activity with farnesyl diphosphate or solanesyl diphosphate. Tocopherol functions to limit lipid oxidation during seed desiccation, quiescence and germination and early seedling development. Protects thylakoid membrane lipids from photooxidation and is required for low-temperature adaptation. The chain is Homogentisate phytyltransferase 1, chloroplastic (HPT1) from Arabidopsis thaliana (Mouse-ear cress).